A 316-amino-acid polypeptide reads, in one-letter code: Ribosomal RNA small subunit methyltransferase H (316 aa).

Residues 35–37 (SGH), D55, F84, D105, and Q112 contribute to the S-adenosyl-L-methionine site.

The protein belongs to the methyltransferase superfamily. RsmH family.

It is found in the cytoplasm. It catalyses the reaction cytidine(1402) in 16S rRNA + S-adenosyl-L-methionine = N(4)-methylcytidine(1402) in 16S rRNA + S-adenosyl-L-homocysteine + H(+). Its function is as follows. Specifically methylates the N4 position of cytidine in position 1402 (C1402) of 16S rRNA. This chain is Ribosomal RNA small subunit methyltransferase H, found in Streptococcus equi subsp. zooepidemicus (strain MGCS10565).